Here is a 538-residue protein sequence, read N- to C-terminus: NADH-quinone oxidoreductase subunit N (538 aa).

A run of 14 helical transmembrane segments spans residues 28-48 (LAPV…EAFV), 57-77 (QIIV…TTIA), 94-114 (PTLA…VLFA), 147-167 (HTEV…FAAA), 170-190 (LIMM…LCGM), 206-226 (FLLG…LYGC), 249-269 (IVAG…AVPF), 288-308 (MAVA…YVGL), 315-335 (WQIV…IVGL), 343-363 (LLAY…VGAW), 380-400 (VLVY…LILM), 424-444 (IGVL…TAGF), 458-478 (GYAW…AFYL), and 503-523 (IAGW…GVAP).

It belongs to the complex I subunit 2 family. As to quaternary structure, NDH-1 is composed of 14 different subunits. Subunits NuoA, H, J, K, L, M, N constitute the membrane sector of the complex.

It localises to the cell membrane. The enzyme catalyses a quinone + NADH + 5 H(+)(in) = a quinol + NAD(+) + 4 H(+)(out). NDH-1 shuttles electrons from NADH, via FMN and iron-sulfur (Fe-S) centers, to quinones in the respiratory chain. The immediate electron acceptor for the enzyme in this species is believed to be a menaquinone. Couples the redox reaction to proton translocation (for every two electrons transferred, four hydrogen ions are translocated across the cytoplasmic membrane), and thus conserves the redox energy in a proton gradient. The polypeptide is NADH-quinone oxidoreductase subunit N (Cutibacterium acnes (strain DSM 16379 / KPA171202) (Propionibacterium acnes)).